The sequence spans 582 residues: Probable DNA ligase (582 aa).

E248 contacts ATP. K250 serves as the catalytic N6-AMP-lysine intermediate. ATP-binding residues include R255, R270, E299, F339, R416, and K422.

Belongs to the ATP-dependent DNA ligase family. It depends on Mg(2+) as a cofactor.

It carries out the reaction ATP + (deoxyribonucleotide)n-3'-hydroxyl + 5'-phospho-(deoxyribonucleotide)m = (deoxyribonucleotide)n+m + AMP + diphosphate.. Its function is as follows. DNA ligase that seals nicks in double-stranded DNA during DNA replication, DNA recombination and DNA repair. The sequence is that of Probable DNA ligase from Persephonella marina (strain DSM 14350 / EX-H1).